A 587-amino-acid chain; its full sequence is Phosphatidylinositol-3-phosphatase SAC1 (587 aa).

Topologically, residues 1–520 are cytoplasmic; it reads MAATTYERLK…SPLSVPRDLK (520 aa). The region spanning 122-451 is the SAC domain; that stretch reads MNHVLSMDGF…ANACAKQYAG (330 aa). Residues 452–587 are essential for phosphatidylinositol-4-phosphate phosphatase activity; that stretch reads TGALKTDFTR…PRLVQKEKID (136 aa). Lys456 carries the post-translational modification N6-acetyllysine. Residues 521-541 traverse the membrane as a helical segment; it reads FLALPIIMVVAFSMCIICLLM. Topologically, residues 542–548 are lumenal; it reads AGDTWTE. A helical transmembrane segment spans residues 549–569; sequence TLAYVLFWGVASIGTFFIILY. The Cytoplasmic segment spans residues 570 to 587; it reads NGKDFVDAPRLVQKEKID.

As to quaternary structure, interacts with TMEM39A. Interacts with SEC23A and SEC24A; this interaction is reduced in the absence of TMEM39A. Interacts with PLEKHA3 and VAPA and/or VAPB to form a ternary complex.

The protein resides in the endoplasmic reticulum membrane. It is found in the golgi apparatus membrane. The catalysed reaction is a 1,2-diacyl-sn-glycero-3-phospho-(1D-myo-inositol-3-phosphate) + H2O = a 1,2-diacyl-sn-glycero-3-phospho-(1D-myo-inositol) + phosphate. It catalyses the reaction a 1,2-diacyl-sn-glycero-3-phospho-(1D-myo-inositol 4-phosphate) + H2O = a 1,2-diacyl-sn-glycero-3-phospho-(1D-myo-inositol) + phosphate. Phosphoinositide phosphatase which catalyzes the hydrolysis of phosphatidylinositol 4-phosphate (PtdIns(4)P), phosphatidylinositol 3-phosphate (PtdIns(3)P) and has low activity towards phosphatidylinositol-3,5-bisphosphate (PtdIns(3,5)P2). Shows a very robust PtdIns(4)P phosphatase activity when it binds PtdIns(4)P in a 'cis' configuration in the cellular environment, with much less activity seen when it binds PtdIns(4)P in 'trans' configuration. PtdIns(4)P phosphatase activity (when it binds PtdIns(4)P in 'trans' configuration) is enhanced in the presence of PLEKHA3. The protein is Phosphatidylinositol-3-phosphatase SAC1 (SACM1L) of Bos taurus (Bovine).